Consider the following 490-residue polypeptide: POC1 centriolar protein homolog B (490 aa).

WD repeat units follow at residues 16 to 55 (GHKD…RAFR), 58 to 97 (GHTD…ESTV), 100 to 139 (AHTA…FLYS), 142 to 181 (RHTN…CINI), 184 to 223 (DYGG…LIQH), 226 to 265 (VHNA…LIYT), and 268 to 307 (GHKG…LNYR). Over residues 375–388 (DGASSSRAQFTSGM) the composition is skewed to polar residues. Residues 375 to 427 (DGASSSRAQFTSGMDSGPFRTHTQAREEEDENQEERFAGGMTASPAERSGIPS) are disordered. Positions 431-463 (STLENIVQQLDILTQTVAVLEERLTLTEDKLRT) form a coiled coil.

This sequence belongs to the WD repeat POC1 family.

The protein localises to the cytoplasm. Its subcellular location is the cytoskeleton. It is found in the microtubule organizing center. It localises to the centrosome. The protein resides in the centriole. Its function is as follows. Plays an important role in centriole assembly and/or stability and ciliogenesis. Involved in early steps of centriole duplication, as well as in the later steps of centriole length control. In Danio rerio (Zebrafish), this protein is POC1 centriolar protein homolog B.